The sequence spans 449 residues: uncharacterized protein (449 aa).

2 disordered regions span residues 1-58 (MVKR…SLSS) and 71-125 (EALE…VVEL). Positions 30–46 (KQRDELREKQKRKREDS) are enriched in basic and acidic residues. Residues 103–124 (SDDDDDDNEEEDDNGFEDQVVE) show a composition bias toward acidic residues.

This sequence belongs to the bystin family.

This is an uncharacterized protein from Caenorhabditis elegans.